The following is a 134-amino-acid chain: Putative cytochrome c oxidase subunit 6b-like (134 aa).

Residues 1–61 (MSSAQMDPHD…DSGRETDAAV (61 aa)) are disordered. 2 stretches are compositionally biased toward basic and acidic residues: residues 7-19 (DPHD…DISK) and 44-61 (ATFR…DAAV). The 44-residue stretch at 71 to 114 (TRHCFNRFMQYHKCIEKNGRDANDCNNLRDYVRSICPEELVSKI) folds into the CHCH domain. The Cx9C motif motif lies at 74 to 84 (CFNRFMQYHKC). Cystine bridges form between Cys74/Cys106 and Cys84/Cys95. The Cx10C motif signature appears at 95–106 (CNNLRDYVRSIC).

This sequence belongs to the cytochrome c oxidase subunit 6B (TC 3.D.4.8) family.

Its subcellular location is the mitochondrion. Functionally, this protein is one of the nuclear-coded polypeptide chains of cytochrome c oxidase, the terminal oxidase in mitochondrial electron transport. This protein may be one of the heme-binding subunits of the oxidase. The sequence is that of Putative cytochrome c oxidase subunit 6b-like from Arabidopsis thaliana (Mouse-ear cress).